Here is a 485-residue protein sequence, read N- to C-terminus: Probable outer membrane usher protein LpfC' (485 aa).

The protein belongs to the fimbrial export usher family.

The protein resides in the cell outer membrane. In terms of biological role, part of the lpfABCC'DE fimbrial operon. LP fimbriae may participate in the interaction with eukaryotic cells by assisting in microcolony formation. Could be involved in the export and assembly of the fimbrial subunits across the outer membrane. This is Probable outer membrane usher protein LpfC' (lpfC') from Escherichia coli O157:H7.